The primary structure comprises 61 residues: Beta-insect depressant toxin BmKIT2 (61 aa).

Residues 1-61 (DGYIKGKSGC…TWKSESNTCG (61 aa)) form the LCN-type CS-alpha/beta domain. Disulfide bonds link Cys10–Cys60, Cys14–Cys35, Cys21–Cys42, and Cys25–Cys44. Glycine amide is present on Gly61.

It belongs to the long (4 C-C) scorpion toxin superfamily. Sodium channel inhibitor family. Beta subfamily. As to expression, expressed by the venom gland.

Its subcellular location is the secreted. Functionally, on insects, this depressant beta-toxins cause a transient contraction paralysis followed by a slow flaccid paralysis. They bind voltage-independently at site-4 of sodium channels (Nav) and shift the voltage of activation toward more negative potentials thereby affecting sodium channel activation and promoting spontaneous and repetitive firing. This toxin is active against insects and mammals. It is capable of binding to not only cockroach neuronal membranes, but also rat cerebrocortical and hippocampal synaptosomes. This toxin also has potent peripheral and central suppressive effects on rat nociceptive spontaneous responses, thermal hyperalgesia and spinal c-Fos expression induced by formalin and carrageenan, which may be derived from its modulation on the activity of sodium channels of the neurons. Administration of BmKIT2 into rat brain can also suppress the epileptic seizures significantly. This chain is Beta-insect depressant toxin BmKIT2, found in Olivierus martensii (Manchurian scorpion).